Reading from the N-terminus, the 328-residue chain is Chlorate reductase subunit beta (328 aa).

4Fe-4S ferredoxin-type domains lie at 6-35 (VAYV…RDGR), 125-156 (NHSF…KRPE), and 158-187 (GIVV…FNLQ). Positions 15, 18, 21, 25, 134, 137, and 142 each coordinate [4Fe-4S] cluster. Positions 146, 167, and 173 each coordinate [3Fe-4S] cluster. [4Fe-4S] cluster-binding residues include cysteine 177, cysteine 194, cysteine 197, cysteine 209, and cysteine 213.

Heterotrimer of alpha, beta and gamma subunits. [3Fe-4S] cluster is required as a cofactor. It depends on [4Fe-4S] cluster as a cofactor.

Its subcellular location is the periplasm. Functionally, electron transfer subunit of the terminal reductase during anaerobic growth on chlorate. This Ideonella dechloratans protein is Chlorate reductase subunit beta (clrB).